Consider the following 309-residue polypeptide: Homoserine kinase (309 aa).

Position 91 to 101 (91 to 101 (PIGSGLGSSAC)) interacts with ATP.

The protein belongs to the GHMP kinase family. Homoserine kinase subfamily.

It is found in the cytoplasm. It catalyses the reaction L-homoserine + ATP = O-phospho-L-homoserine + ADP + H(+). The protein operates within amino-acid biosynthesis; L-threonine biosynthesis; L-threonine from L-aspartate: step 4/5. Its function is as follows. Catalyzes the ATP-dependent phosphorylation of L-homoserine to L-homoserine phosphate. This Yersinia enterocolitica serotype O:8 / biotype 1B (strain NCTC 13174 / 8081) protein is Homoserine kinase.